Consider the following 714-residue polypeptide: Fatty acid oxidation complex subunit alpha (714 aa).

Residues 1 to 190 (MEMTSAFTLN…KLGLVDDVVP (190 aa)) form an enoyl-CoA hydratase region. The 3-hydroxyacyl-CoA dehydrogenase stretch occupies residues 306-714 (APLNSVGILG…FWKTTATDLQ (409 aa)).

It in the N-terminal section; belongs to the enoyl-CoA hydratase/isomerase family. The protein in the central section; belongs to the 3-hydroxyacyl-CoA dehydrogenase family. Heterotetramer of two alpha chains (FadJ) and two beta chains (FadI).

The protein localises to the cytoplasm. It catalyses the reaction a (3S)-3-hydroxyacyl-CoA = a (2E)-enoyl-CoA + H2O. It carries out the reaction a 4-saturated-(3S)-3-hydroxyacyl-CoA = a (3E)-enoyl-CoA + H2O. The enzyme catalyses a (3S)-3-hydroxyacyl-CoA + NAD(+) = a 3-oxoacyl-CoA + NADH + H(+). The catalysed reaction is (3S)-3-hydroxybutanoyl-CoA = (3R)-3-hydroxybutanoyl-CoA. Its pathway is lipid metabolism; fatty acid beta-oxidation. Its function is as follows. Catalyzes the formation of a hydroxyacyl-CoA by addition of water on enoyl-CoA. Also exhibits 3-hydroxyacyl-CoA epimerase and 3-hydroxyacyl-CoA dehydrogenase activities. Strongly involved in the anaerobic degradation of long and medium-chain fatty acids in the presence of nitrate and weakly involved in the aerobic degradation of long-chain fatty acids. This Escherichia coli (strain K12) protein is Fatty acid oxidation complex subunit alpha (fadJ).